A 151-amino-acid polypeptide reads, in one-letter code: MTGLERQLTEMLEAPVGALGYELVGLEFIRAGEHSTLRVFIDHENGIFVEDCAEASRQISAVMDVEDPITVAYNLEVSSPGLERPLFKAAHYQQFVGHEVSLVLKMPMNNRRKWKGDILDINGEIVTVTVDGNNEEFALSNISKANLVPKF.

The protein belongs to the RimP family.

Its subcellular location is the cytoplasm. Its function is as follows. Required for maturation of 30S ribosomal subunits. This chain is Ribosome maturation factor RimP, found in Aliivibrio salmonicida (strain LFI1238) (Vibrio salmonicida (strain LFI1238)).